Here is a 192-residue protein sequence, read N- to C-terminus: Orotate phosphoribosyltransferase (192 aa).

5-phospho-alpha-D-ribose 1-diphosphate is bound at residue 116–124 (EDIVTTGLS). T120 and R148 together coordinate orotate.

Belongs to the purine/pyrimidine phosphoribosyltransferase family. PyrE subfamily. In terms of assembly, homodimer. Mg(2+) serves as cofactor.

The enzyme catalyses orotidine 5'-phosphate + diphosphate = orotate + 5-phospho-alpha-D-ribose 1-diphosphate. It participates in pyrimidine metabolism; UMP biosynthesis via de novo pathway; UMP from orotate: step 1/2. In terms of biological role, catalyzes the transfer of a ribosyl phosphate group from 5-phosphoribose 1-diphosphate to orotate, leading to the formation of orotidine monophosphate (OMP). The chain is Orotate phosphoribosyltransferase from Brucella abortus (strain S19).